We begin with the raw amino-acid sequence, 370 residues long: Proto-oncogene Wnt-1 (370 aa).

The first 27 residues, 1-27 (MGLWALLPGWVSATLLLALAALPAALA), serve as a signal peptide directing secretion. N-linked (GlcNAc...) asparagine glycosylation is present at Asn-29. Intrachain disulfides connect Cys-93–Cys-104, Cys-143–Cys-151, Cys-153–Cys-170, Cys-218–Cys-232, Cys-220–Cys-227, Cys-299–Cys-330, Cys-315–Cys-325, Cys-329–Cys-369, Cys-345–Cys-360, Cys-347–Cys-357, and Cys-352–Cys-353. A lipid anchor (O-palmitoleoyl serine; by PORCN) is attached at Ser-224. 2 N-linked (GlcNAc...) asparagine glycosylation sites follow: Asn-316 and Asn-346. A glycan (N-linked (GlcNAc...) asparagine) is linked at Asn-359.

Belongs to the Wnt family. As to quaternary structure, forms a soluble 1:1 complex with AFM; this prevents oligomerization and is required for prolonged biological activity. The complex with AFM may represent the physiological form in body fluids. Interacts with PORCN. Interacts with RSPO1, RSPO2 and RSPO3. Interacts with WLS. Palmitoleoylation is required for efficient binding to frizzled receptors. Palmitoleoylation is necessary for proper trafficking to cell surface. Depalmitoleoylated by NOTUM, leading to inhibit Wnt signaling pathway.

The protein localises to the secreted. Its subcellular location is the extracellular space. The protein resides in the extracellular matrix. Functionally, ligand for members of the frizzled family of seven transmembrane receptors. Acts in the canonical Wnt signaling pathway by promoting beta-catenin-dependent transcriptional activation. In some developmental processes, is also a ligand for the coreceptor RYK, thus triggering Wnt signaling. Plays an essential role in the development of the embryonic brain and central nervous system (CNS). Has a role in osteoblast function, bone development and bone homeostasis. The protein is Proto-oncogene Wnt-1 (WNT1) of Homo sapiens (Human).